Consider the following 214-residue polypeptide: RNA pyrophosphohydrolase (214 aa).

The region spanning 6 to 149 (GFRPNVGIIL…KRDVYQLALT (144 aa)) is the Nudix hydrolase domain. Residues 38 to 59 (GGIKYGETPMQAMYRELHEETG) carry the Nudix box motif.

It belongs to the Nudix hydrolase family. RppH subfamily. A divalent metal cation is required as a cofactor.

In terms of biological role, accelerates the degradation of transcripts by removing pyrophosphate from the 5'-end of triphosphorylated RNA, leading to a more labile monophosphorylated state that can stimulate subsequent ribonuclease cleavage. The protein is RNA pyrophosphohydrolase of Burkholderia cenocepacia (strain HI2424).